Here is a 236-residue protein sequence, read N- to C-terminus: 1-(5-phosphoribosyl)-5-[(5-phosphoribosylamino)methylideneamino] imidazole-4-carboxamide isomerase (236 aa).

D8 functions as the Proton acceptor in the catalytic mechanism. The active-site Proton donor is D128.

This sequence belongs to the HisA/HisF family.

The protein resides in the cytoplasm. The enzyme catalyses 1-(5-phospho-beta-D-ribosyl)-5-[(5-phospho-beta-D-ribosylamino)methylideneamino]imidazole-4-carboxamide = 5-[(5-phospho-1-deoxy-D-ribulos-1-ylimino)methylamino]-1-(5-phospho-beta-D-ribosyl)imidazole-4-carboxamide. Its pathway is amino-acid biosynthesis; L-histidine biosynthesis; L-histidine from 5-phospho-alpha-D-ribose 1-diphosphate: step 4/9. The protein is 1-(5-phosphoribosyl)-5-[(5-phosphoribosylamino)methylideneamino] imidazole-4-carboxamide isomerase of Nitrosopumilus maritimus (strain SCM1).